A 421-amino-acid polypeptide reads, in one-letter code: Histidine--tRNA ligase (421 aa).

The protein belongs to the class-II aminoacyl-tRNA synthetase family. Homodimer.

Its subcellular location is the cytoplasm. The catalysed reaction is tRNA(His) + L-histidine + ATP = L-histidyl-tRNA(His) + AMP + diphosphate + H(+). This Alkaliphilus oremlandii (strain OhILAs) (Clostridium oremlandii (strain OhILAs)) protein is Histidine--tRNA ligase.